The chain runs to 464 residues: Chaperone SurA (464 aa).

An N-terminal signal peptide occupies residues 1–25 (MTRYFSIVLSLLLAVSCVFLPVASA). 2 consecutive PpiC domains span residues 175 to 277 (GAQY…KLVE) and 292 to 391 (ATEY…QRLG). The segment at 439-464 (PADDHQTPSAAVIPATGAVLPSATKH) is disordered.

It localises to the periplasm. The enzyme catalyses [protein]-peptidylproline (omega=180) = [protein]-peptidylproline (omega=0). In terms of biological role, chaperone involved in the correct folding and assembly of outer membrane proteins. Recognizes specific patterns of aromatic residues and the orientation of their side chains, which are found more frequently in integral outer membrane proteins. May act in both early periplasmic and late outer membrane-associated steps of protein maturation. The polypeptide is Chaperone SurA (Xylella fastidiosa (strain 9a5c)).